The following is a 242-amino-acid chain: Biosynthetic peptidoglycan transglycosylase (242 aa).

A helical transmembrane segment spans residues isoleucine 19 to valine 39.

Belongs to the glycosyltransferase 51 family.

It is found in the cell inner membrane. The catalysed reaction is [GlcNAc-(1-&gt;4)-Mur2Ac(oyl-L-Ala-gamma-D-Glu-L-Lys-D-Ala-D-Ala)](n)-di-trans,octa-cis-undecaprenyl diphosphate + beta-D-GlcNAc-(1-&gt;4)-Mur2Ac(oyl-L-Ala-gamma-D-Glu-L-Lys-D-Ala-D-Ala)-di-trans,octa-cis-undecaprenyl diphosphate = [GlcNAc-(1-&gt;4)-Mur2Ac(oyl-L-Ala-gamma-D-Glu-L-Lys-D-Ala-D-Ala)](n+1)-di-trans,octa-cis-undecaprenyl diphosphate + di-trans,octa-cis-undecaprenyl diphosphate + H(+). The protein operates within cell wall biogenesis; peptidoglycan biosynthesis. Peptidoglycan polymerase that catalyzes glycan chain elongation from lipid-linked precursors. This is Biosynthetic peptidoglycan transglycosylase from Salmonella typhi.